The chain runs to 3092 residues: Inhibitory regulator protein IRA1 (3092 aa).

Disordered regions lie at residues 375–430 (HLHH…MASL) and 450–487 (LGQA…NSAN). The span at 379–400 (SSSSSKTTNTNSPNSISKTSIK) shows a compositional bias: low complexity. Polar residues predominate over residues 401–430 (QSSVNASGNVSPSQFSTGNDASPTSPMASL). Positions 455–487 (TSTSTTAATTKTDADTPSTMNTNNNNNNNNSAN) are enriched in low complexity. Phosphoserine is present on residues Ser-497 and Ser-915. Disordered stretches follow at residues 946 to 988 (SGVP…VLSS) and 1003 to 1023 (TILK…ADDK). Over residues 965-988 (QSPYSSPPQLQQSDLPSPLSVLSS) the composition is skewed to low complexity. At Ser-1342 the chain carries Phosphoserine. A Ras-GAP domain is found at 1725 to 1930 (NASHILVTEL…DKIFNFLSEL (206 aa)). A phosphoserine; by PKA mark is found at Ser-1753 and Ser-3004.

It is found in the cytoplasm. Inhibitory regulator of the Ras-cyclic AMP pathway in S.cerevisiae. Stimulates the GTPase activity of Ras proteins. The chain is Inhibitory regulator protein IRA1 (IRA1) from Saccharomyces cerevisiae (strain ATCC 204508 / S288c) (Baker's yeast).